The primary structure comprises 454 residues: Macrophage scavenger receptor types I and II (454 aa).

The segment at 1–22 (MAQWDSFTDQQEDTDSCSESVK) is disordered. At 1–50 (MAQWDSFTDQQEDTDSCSESVKFDARSNTALLPPNPKNGPPLQEKLKSFK) the chain is on the cytoplasmic side. S27 carries the post-translational modification Phosphoserine. A helical; Signal-anchor for type II membrane protein transmembrane segment spans residues 51–73 (AALIALYLLVFAVLIPIIAIMAA). The tract at residues 74–109 (QLLKWEMKNCTVGSINANSVSSSLLGRGNDSEHEVR) is spacer. Residues 74–454 (QLLKWEMKNC…GEDAGVTCTL (381 aa)) lie on the Extracellular side of the membrane. N-linked (GlcNAc...) asparagine glycans are attached at residues N82, N102, N143, N184, N221, N249, and N267. Residues 199–256 (VKFQENTLKGQEEISKLKERVHNASAEIMSMKEEQVHLEQEIKREVKVLNNITNDLRL) adopt a coiled-coil conformation. Residues 267–347 (NITLIQGPPG…KGEKGSGSIL (81 aa)) are disordered. The region spanning 273–344 (GPPGPPGEKG…KGQKGEKGSG (72 aa)) is the Collagen-like domain. Residues 353-453 (VRLVGGRGPH…HGEDAGVTCT (101 aa)) enclose the SRCR domain. 3 cysteine pairs are disulfide-bonded: C378-C442, C391-C452, and C422-C432.

Homotrimer. Interacts with MYO18A.

It localises to the membrane. Its function is as follows. Membrane glycoproteins implicated in the pathologic deposition of cholesterol in arterial walls during atherogenesis. Two types of receptor subunits exist. These receptors mediate the endocytosis of a diverse group of macromolecules, including modified low density lipoproteins (LDL). The protein is Macrophage scavenger receptor types I and II (MSR1) of Oryctolagus cuniculus (Rabbit).